The chain runs to 226 residues: 2-C-methyl-D-erythritol 4-phosphate cytidylyltransferase (226 aa).

Belongs to the IspD/TarI cytidylyltransferase family. IspD subfamily.

It catalyses the reaction 2-C-methyl-D-erythritol 4-phosphate + CTP + H(+) = 4-CDP-2-C-methyl-D-erythritol + diphosphate. Its pathway is isoprenoid biosynthesis; isopentenyl diphosphate biosynthesis via DXP pathway; isopentenyl diphosphate from 1-deoxy-D-xylulose 5-phosphate: step 2/6. Functionally, catalyzes the formation of 4-diphosphocytidyl-2-C-methyl-D-erythritol from CTP and 2-C-methyl-D-erythritol 4-phosphate (MEP). The chain is 2-C-methyl-D-erythritol 4-phosphate cytidylyltransferase from Bacillus cytotoxicus (strain DSM 22905 / CIP 110041 / 391-98 / NVH 391-98).